A 62-amino-acid polypeptide reads, in one-letter code: Photosystem II reaction center protein Z (62 aa).

The next 2 helical transmembrane spans lie at 8 to 28 and 41 to 61; these read SVFA…VALA and FSGV…NSFI.

Belongs to the PsbZ family. As to quaternary structure, PSII is composed of 1 copy each of membrane proteins PsbA, PsbB, PsbC, PsbD, PsbE, PsbF, PsbH, PsbI, PsbJ, PsbK, PsbL, PsbM, PsbT, PsbY, PsbZ, Psb30/Ycf12, at least 3 peripheral proteins of the oxygen-evolving complex and a large number of cofactors. It forms dimeric complexes.

The protein localises to the plastid. Its subcellular location is the chloroplast thylakoid membrane. Functionally, may control the interaction of photosystem II (PSII) cores with the light-harvesting antenna, regulates electron flow through the 2 photosystem reaction centers. PSII is a light-driven water plastoquinone oxidoreductase, using light energy to abstract electrons from H(2)O, generating a proton gradient subsequently used for ATP formation. The protein is Photosystem II reaction center protein Z of Cryptomeria japonica (Japanese cedar).